The following is a 196-amino-acid chain: Elongation factor Ts (196 aa).

An involved in Mg(2+) ion dislocation from EF-Tu region spans residues 80 to 83; sequence TDFV.

Belongs to the EF-Ts family.

The protein localises to the cytoplasm. Associates with the EF-Tu.GDP complex and induces the exchange of GDP to GTP. It remains bound to the aminoacyl-tRNA.EF-Tu.GTP complex up to the GTP hydrolysis stage on the ribosome. This is Elongation factor Ts from Thermosipho melanesiensis (strain DSM 12029 / CIP 104789 / BI429).